A 65-amino-acid chain; its full sequence is Large ribosomal subunit protein uL30 (65 aa).

It belongs to the universal ribosomal protein uL30 family. In terms of assembly, part of the 50S ribosomal subunit.

The polypeptide is Large ribosomal subunit protein uL30 (Onion yellows phytoplasma (strain OY-M)).